Consider the following 139-residue polypeptide: uncharacterized protein (139 aa).

2 helical membrane-spanning segments follow: residues 71–91 (LFSALLMYIVQLFTLLVATLL) and 97–117 (ENELIRAILIFMLTALSFVMV).

It belongs to the RseC family.

The protein localises to the cell inner membrane. This is an uncharacterized protein from Haemophilus influenzae (strain ATCC 51907 / DSM 11121 / KW20 / Rd).